A 745-amino-acid polypeptide reads, in one-letter code: Exocyst complex component 3 (745 aa).

The residue at position 28 (Lys28) is an N6-acetyllysine.

The protein belongs to the SEC6 family. The exocyst complex is composed of EXOC1, EXOC2, EXOC3, EXOC4, EXOC5, EXOC6, EXOC7 and EXOC8. Interacts with EXOC3L1. Interacts with BIRC6/bruce. Interacts with MYRIP. Interacts with SLC6A9.

It is found in the cytoplasm. Its subcellular location is the perinuclear region. It localises to the cell projection. The protein resides in the growth cone. The protein localises to the neuron projection. It is found in the midbody. Its subcellular location is the golgi apparatus. Its function is as follows. Component of the exocyst complex involved in the docking of exocytic vesicles with fusion sites on the plasma membrane. The protein is Exocyst complex component 3 (EXOC3) of Bos taurus (Bovine).